Here is a 103-residue protein sequence, read N- to C-terminus: Colicin-V (103 aa).

Residues 1–15 (MRTLTLNELDSVSGG) constitute a propeptide that is removed on maturation. An intrachain disulfide couples Cys91 to Cys102.

It is found in the secreted. In terms of biological role, colicin V kills sensitive cells by disrupting the membrane potential. Colicins are polypeptide toxins produced by, and active against E.coli and closely related bacteria. In Escherichia coli, this protein is Colicin-V (cvaC).